Consider the following 306-residue polypeptide: Pantothenate kinase (306 aa).

91–98 is an ATP binding site; that stretch reads GSVAVGKS.

This sequence belongs to the prokaryotic pantothenate kinase family.

The protein localises to the cytoplasm. It carries out the reaction (R)-pantothenate + ATP = (R)-4'-phosphopantothenate + ADP + H(+). The protein operates within cofactor biosynthesis; coenzyme A biosynthesis; CoA from (R)-pantothenate: step 1/5. The sequence is that of Pantothenate kinase (coaA) from Streptococcus pyogenes serotype M18 (strain MGAS8232).